The primary structure comprises 673 residues: DNA ligase (673 aa).

Residues 36–40, 85–86, and Glu116 each bind NAD(+); these read DAEYD and SL. Lys118 serves as the catalytic N6-AMP-lysine intermediate. NAD(+) contacts are provided by Arg139, Glu176, Lys291, and Lys315. The Zn(2+) site is built by Cys409, Cys412, Cys427, and Cys433. Residues 592–673 form the BRCT domain; the sequence is RGEQPLAGRT…LQALLQEHGR (82 aa).

This sequence belongs to the NAD-dependent DNA ligase family. LigA subfamily. Mg(2+) is required as a cofactor. Mn(2+) serves as cofactor.

The catalysed reaction is NAD(+) + (deoxyribonucleotide)n-3'-hydroxyl + 5'-phospho-(deoxyribonucleotide)m = (deoxyribonucleotide)n+m + AMP + beta-nicotinamide D-nucleotide.. In terms of biological role, DNA ligase that catalyzes the formation of phosphodiester linkages between 5'-phosphoryl and 3'-hydroxyl groups in double-stranded DNA using NAD as a coenzyme and as the energy source for the reaction. It is essential for DNA replication and repair of damaged DNA. This is DNA ligase from Alkalilimnicola ehrlichii (strain ATCC BAA-1101 / DSM 17681 / MLHE-1).